The sequence spans 498 residues: Tyrosine 3-monooxygenase (498 aa).

Over residues 1 to 10 the composition is skewed to polar residues; that stretch reads MPTPSASSPQ. Residues 1-33 form a disordered region; the sequence is MPTPSASSPQPKGFRRAVSEQDTKQAEAVTSPR. Phosphoserine is present on residues serine 19 and serine 31. Serine 40 is modified (phosphoserine; by CaMK2 and PKA). 3 residues coordinate Fe cation: histidine 331, histidine 336, and glutamate 376. Residue serine 472 is modified to Phosphoserine.

The protein belongs to the biopterin-dependent aromatic amino acid hydroxylase family. Homotetramer. Interacts (when phosphorylated at Ser-19) with YWHAG; one YWHAG dimer bounds to one TH tetramer and this interaction may influence the phosphorylation and dephosphorylation of other sites. Interacts with NT5DC2; the interaction results in reduced phosphorylation and decreased catalytic activity of TH. It depends on Fe(2+) as a cofactor. Post-translationally, phosphorylated on Ser-19, Ser-31 and Ser-40 by several protein kinases with different site specificities. Phosphorylation at Ser-31 and Ser-40 leads to an increase of TH activity. Phosphorylation at Ser-40 activates the enzyme and also counteracts the feedback inhibition of TH by catecholamines. Phosphorylation of Ser-19 and Ser-31 triggers the proteasomal degradation of TH through the ubiquitin-proteasome pathway. Phosphorylation at Ser-31 facilitates transport of TH from the soma to the nerve terminals via the microtubule network. Phosphorylation at Ser-19 induces the high-affinity binding to the 14-3-3 protein YWHAG; this interaction may influence the phosphorylation and dephosphorylation of other sites. Ser-19 increases the phosphorylation at Ser-40 in a hierarchical manner, leading to increased activity. In terms of tissue distribution, expressed in the adrenal gland. Expressed in the retina. Expressed in the in the striatum (at protein level).

Its subcellular location is the cytoplasm. The protein resides in the perinuclear region. It localises to the nucleus. The protein localises to the cell projection. It is found in the axon. Its subcellular location is the cytoplasmic vesicle. The protein resides in the secretory vesicle. It localises to the synaptic vesicle. It catalyses the reaction (6R)-L-erythro-5,6,7,8-tetrahydrobiopterin + L-tyrosine + O2 = (4aS,6R)-4a-hydroxy-L-erythro-5,6,7,8-tetrahydrobiopterin + L-dopa. It functions in the pathway catecholamine biosynthesis; dopamine biosynthesis; dopamine from L-tyrosine: step 1/2. With respect to regulation, inhibited in feedback fashion by the catecholamine neurotransmitters, especially by dopamine in competition with tetrahydrobiopterin. Phosphorylation of several Ser/Thr residues in the N-terminus regulates the catalytic activity. Ser-31 and Ser-40 are readily phosphorylated to activate the catalytic activity. A Cysteine modification induced by N-ethylmaleimide (NEM), inhibits tyrosine 3-monooxygenase activity through the modification of the Cys-177. Catalyzes the conversion of L-tyrosine to L-dihydroxyphenylalanine (L-Dopa), the rate-limiting step in the biosynthesis of catecholamines, dopamine, noradrenaline, and adrenaline. Uses tetrahydrobiopterin and molecular oxygen to convert tyrosine to L-Dopa. In addition to tyrosine, is able to catalyze the hydroxylation of phenylalanine and tryptophan with lower specificity. Positively regulates the regression of retinal hyaloid vessels during postnatal development. The chain is Tyrosine 3-monooxygenase (Th) from Mus musculus (Mouse).